Reading from the N-terminus, the 150-residue chain is Large ribosomal subunit protein bL9 (150 aa).

It belongs to the bacterial ribosomal protein bL9 family.

Its function is as follows. Binds to the 23S rRNA. In Polaromonas naphthalenivorans (strain CJ2), this protein is Large ribosomal subunit protein bL9.